We begin with the raw amino-acid sequence, 470 residues long: Iron-sulfur cluster assembly SufBD family protein ABCI9 (470 aa).

The protein belongs to the iron-sulfur cluster assembly SufBD family.

This chain is Iron-sulfur cluster assembly SufBD family protein ABCI9 (ABCI9), found in Arabidopsis thaliana (Mouse-ear cress).